The following is a 292-amino-acid chain: MNRERQKKPEWLKLKLSTGEHFAATRQLLSGLRLNTVCRSAMCPNLQECWSKGTATFMLLGSVCTRTCRFCAVDKTVLPVPPDPEEPEKIALAVKSMSLKHVVLTSVNRDDLPDGGSGHWVSSIRSIRSLNPEVSIECLVPDFDGITANADRVMQEAPEVLNHNIETVPSLYPAVRPQADYRRSLELIERAKAVFRLSTKSGMMVGMGETGDEVAASLGDLRASRCDIVTIGQYLQPTAAHLPVNRYVTPDEFEEYKNRAESLGFRHVQSGPFVRSSYHAEEFVAARHIERC.

[4Fe-4S] cluster-binding residues include cysteine 38, cysteine 43, cysteine 49, cysteine 64, cysteine 68, cysteine 71, and serine 277. One can recognise a Radical SAM core domain in the interval 50-266; sequence WSKGTATFML…KNRAESLGFR (217 aa).

Belongs to the radical SAM superfamily. Lipoyl synthase family. [4Fe-4S] cluster serves as cofactor.

It is found in the cytoplasm. It carries out the reaction [[Fe-S] cluster scaffold protein carrying a second [4Fe-4S](2+) cluster] + N(6)-octanoyl-L-lysyl-[protein] + 2 oxidized [2Fe-2S]-[ferredoxin] + 2 S-adenosyl-L-methionine + 4 H(+) = [[Fe-S] cluster scaffold protein] + N(6)-[(R)-dihydrolipoyl]-L-lysyl-[protein] + 4 Fe(3+) + 2 hydrogen sulfide + 2 5'-deoxyadenosine + 2 L-methionine + 2 reduced [2Fe-2S]-[ferredoxin]. It participates in protein modification; protein lipoylation via endogenous pathway; protein N(6)-(lipoyl)lysine from octanoyl-[acyl-carrier-protein]: step 2/2. Functionally, catalyzes the radical-mediated insertion of two sulfur atoms into the C-6 and C-8 positions of the octanoyl moiety bound to the lipoyl domains of lipoate-dependent enzymes, thereby converting the octanoylated domains into lipoylated derivatives. This chain is Lipoyl synthase, found in Chlorobium limicola (strain DSM 245 / NBRC 103803 / 6330).